The following is a 344-amino-acid chain: Anthranilate phosphoribosyltransferase (344 aa).

5-phospho-alpha-D-ribose 1-diphosphate contacts are provided by residues Gly-80, 83 to 84 (GD), Thr-88, 90 to 93 (NIST), 108 to 116 (KHGNRSVSS), and Ser-120. Position 80 (Gly-80) interacts with anthranilate. Ser-92 is a Mg(2+) binding site. Residue Asn-111 coordinates anthranilate. An anthranilate-binding site is contributed by Arg-166. 2 residues coordinate Mg(2+): Asp-225 and Glu-226.

The protein belongs to the anthranilate phosphoribosyltransferase family. As to quaternary structure, homodimer. Mg(2+) is required as a cofactor.

It catalyses the reaction N-(5-phospho-beta-D-ribosyl)anthranilate + diphosphate = 5-phospho-alpha-D-ribose 1-diphosphate + anthranilate. The protein operates within amino-acid biosynthesis; L-tryptophan biosynthesis; L-tryptophan from chorismate: step 2/5. Catalyzes the transfer of the phosphoribosyl group of 5-phosphorylribose-1-pyrophosphate (PRPP) to anthranilate to yield N-(5'-phosphoribosyl)-anthranilate (PRA). This chain is Anthranilate phosphoribosyltransferase, found in Petrotoga mobilis (strain DSM 10674 / SJ95).